Consider the following 135-residue polypeptide: Calcium-binding protein KIC (135 aa).

The EF-hand domain occupies 74-109 (MSKEDAQGMVREGDLDGDGALNQTEFCVLMVRLSPE). Positions 87, 89, 91, and 98 each coordinate Ca(2+).

In terms of assembly, interacts with KCBP (via C-terminus). KIC and calmodulin show competitive binding to KCBP. Interacts with CML42. Binds to ABCG36. Expressed in stems, leaves and flowers.

Calcium-binding regulatory protein that interacts with kinesin motor protein KCBP in a calcium-dependent manner. Inhibits KCBP microtubule binding activity and microtubule-stimulated ATPase activity. Involved in the regulation of trichome branching through its interaction with KCBP. The polypeptide is Calcium-binding protein KIC (Arabidopsis thaliana (Mouse-ear cress)).